A 216-amino-acid chain; its full sequence is Somatotropin (216 aa).

A signal peptide spans 1–25 (MAPGSWFSPLFITVITLGLQWPQEA). His46 is a binding site for Zn(2+). Cysteines 78 and 189 form a disulfide. Residue Glu198 participates in Zn(2+) binding. Cys206 and Cys214 are joined by a disulfide.

This sequence belongs to the somatotropin/prolactin family.

The protein localises to the secreted. Its function is as follows. Growth hormone plays an important role in growth control. The sequence is that of Somatotropin (GH) from Anas platyrhynchos (Mallard).